A 316-amino-acid chain; its full sequence is Olfactory receptor 10A7 (316 aa).

At 1 to 25 the chain is on the extracellular side; sequence MICENHTRVTEFILLGFTNNPEMQV. N-linked (GlcNAc...) asparagine glycosylation is present at N5. A helical transmembrane segment spans residues 26 to 46; that stretch reads SLFIFFLAIYTVTLLGNFLIV. The Cytoplasmic portion of the chain corresponds to 47 to 54; it reads TVTSVDLA. Residues 55–75 form a helical membrane-spanning segment; it reads LQTPMYFFLQNLSLLEVCFTL. Over 76-99 the chain is Extracellular; sequence VMVPKMLVDLVSPRKIISFVGCGT. A helical membrane pass occupies residues 100 to 120; sequence QMYFFFFFGSSECFLLSMMAY. Residues 121–139 lie on the Cytoplasmic side of the membrane; that stretch reads DRFVAICNPLHYSVIMNRS. Residues 140–160 traverse the membrane as a helical segment; the sequence is LCLWMAIGSWMSGVPVSMLQT. Residues 161 to 197 are Extracellular-facing; that stretch reads AWMMALPFCGPNAVDHFFCDGPPVLKLVTVDTTMYEM. Residues 198–217 form a helical membrane-spanning segment; it reads QALASTLLFIMFPFCLILVS. Topologically, residues 218–237 are cytoplasmic; the sequence is YTRIIITILRMSSATGRQKA. The helical transmembrane segment at 238–258 threads the bilayer; the sequence is FSTCSSHLIVVSLFYGTASLT. Over 259 to 271 the chain is Extracellular; the sequence is YLRPKSNQSPESK. Residues 272 to 292 form a helical membrane-spanning segment; sequence KLVSLSYTVITPMLNPIIYGL. Over 293-316 the chain is Cytoplasmic; it reads RNNEVKGAVKRTITQKVLQKLDVF.

It belongs to the G-protein coupled receptor 1 family.

Its subcellular location is the cell membrane. Odorant receptor. The protein is Olfactory receptor 10A7 (OR10A7) of Homo sapiens (Human).